The sequence spans 390 residues: 3-ketoacyl-CoA thiolase (390 aa).

Residue Cys-95 is the Acyl-thioester intermediate of the active site. Residues His-346 and Cys-376 each act as proton acceptor in the active site.

The protein belongs to the thiolase-like superfamily. Thiolase family. As to quaternary structure, heterotetramer of two alpha chains (FadB) and two beta chains (FadA).

It localises to the cytoplasm. The catalysed reaction is an acyl-CoA + acetyl-CoA = a 3-oxoacyl-CoA + CoA. The protein operates within lipid metabolism; fatty acid beta-oxidation. Functionally, catalyzes the final step of fatty acid oxidation in which acetyl-CoA is released and the CoA ester of a fatty acid two carbons shorter is formed. In Acinetobacter baylyi (strain ATCC 33305 / BD413 / ADP1), this protein is 3-ketoacyl-CoA thiolase.